We begin with the raw amino-acid sequence, 379 residues long: Cinnamyl alcohol dehydrogenase 7 (379 aa).

Residues 1-13 (MAPTTTATAAAEQ) show a composition bias toward low complexity. Residues 1 to 21 (MAPTTTATAAAEQAPPPQHTR) are disordered. Cys-60 lines the Zn(2+) pocket. Ser-62 is an NADP(+) binding site. Zn(2+)-binding residues include His-82, Glu-83, Cys-113, Cys-116, Cys-119, Cys-127, and Cys-185. NADP(+) contacts are provided by residues Thr-189, 210 to 215 (GLGGLG), 233 to 238 (STSPVK), Thr-273, Gly-297, and 320 to 322 (SCM).

It belongs to the zinc-containing alcohol dehydrogenase family. As to quaternary structure, homodimer. Zn(2+) serves as cofactor. In terms of tissue distribution, expressed in roots, first internodes and panicles. Expressed in the vascular bundles and sclerenchyma cells below the epidermis in leaves and stems.

It catalyses the reaction (E)-cinnamyl alcohol + NADP(+) = (E)-cinnamaldehyde + NADPH + H(+). It carries out the reaction (E)-coniferol + NADP(+) = (E)-coniferaldehyde + NADPH + H(+). The catalysed reaction is (E)-sinapyl alcohol + NADP(+) = (E)-sinapaldehyde + NADPH + H(+). The enzyme catalyses (E)-4-coumaroyl alcohol + NADP(+) = (E)-4-coumaraldehyde + NADPH + H(+). It catalyses the reaction (E)-caffeyl alcohol + NADP(+) = (E)-caffeyl aldehyde + NADPH + H(+). Its pathway is aromatic compound metabolism; phenylpropanoid biosynthesis. Involved in lignin biosynthesis. May catalyze the final step specific for the production of lignin monomers, like coniferyl alcohol, sinapyl alcohol and 4-coumaryl alcohol. This chain is Cinnamyl alcohol dehydrogenase 7, found in Oryza sativa subsp. japonica (Rice).